The sequence spans 185 residues: Elongation factor P (185 aa).

Belongs to the elongation factor P family.

It localises to the cytoplasm. Its pathway is protein biosynthesis; polypeptide chain elongation. In terms of biological role, involved in peptide bond synthesis. Stimulates efficient translation and peptide-bond synthesis on native or reconstituted 70S ribosomes in vitro. Probably functions indirectly by altering the affinity of the ribosome for aminoacyl-tRNA, thus increasing their reactivity as acceptors for peptidyl transferase. The polypeptide is Elongation factor P (Alkaliphilus metalliredigens (strain QYMF)).